A 171-amino-acid polypeptide reads, in one-letter code: 3-hydroxydecanoyl-[acyl-carrier-protein] dehydratase (171 aa).

The active site involves H70.

It belongs to the thioester dehydratase family. FabA subfamily. In terms of assembly, homodimer.

Its subcellular location is the cytoplasm. It catalyses the reaction a (3R)-hydroxyacyl-[ACP] = a (2E)-enoyl-[ACP] + H2O. The catalysed reaction is (3R)-hydroxydecanoyl-[ACP] = (2E)-decenoyl-[ACP] + H2O. It carries out the reaction (2E)-decenoyl-[ACP] = (3Z)-decenoyl-[ACP]. It functions in the pathway lipid metabolism; fatty acid biosynthesis. In terms of biological role, necessary for the introduction of cis unsaturation into fatty acids. Catalyzes the dehydration of (3R)-3-hydroxydecanoyl-ACP to E-(2)-decenoyl-ACP and then its isomerization to Z-(3)-decenoyl-ACP. Can catalyze the dehydratase reaction for beta-hydroxyacyl-ACPs with saturated chain lengths up to 16:0, being most active on intermediate chain length. The sequence is that of 3-hydroxydecanoyl-[acyl-carrier-protein] dehydratase from Hydrogenovibrio crunogenus (strain DSM 25203 / XCL-2) (Thiomicrospira crunogena).